A 190-amino-acid chain; its full sequence is Peptidyl-tRNA hydrolase (190 aa).

Position 14 (Tyr14) interacts with tRNA. Residue His19 is the Proton acceptor of the active site. TRNA-binding residues include Tyr64, Asn66, and Asn112.

It belongs to the PTH family. Monomer.

The protein localises to the cytoplasm. It catalyses the reaction an N-acyl-L-alpha-aminoacyl-tRNA + H2O = an N-acyl-L-amino acid + a tRNA + H(+). Its function is as follows. Hydrolyzes ribosome-free peptidyl-tRNAs (with 1 or more amino acids incorporated), which drop off the ribosome during protein synthesis, or as a result of ribosome stalling. Functionally, catalyzes the release of premature peptidyl moieties from peptidyl-tRNA molecules trapped in stalled 50S ribosomal subunits, and thus maintains levels of free tRNAs and 50S ribosomes. The chain is Peptidyl-tRNA hydrolase from Chlorobium phaeobacteroides (strain DSM 266 / SMG 266 / 2430).